A 176-amino-acid polypeptide reads, in one-letter code: Tubulin polymerization-promoting protein family member 3 (176 aa).

Residues 126–152 (TDTSKYTGSHKERFDESGKGKGKGGRE) form a disordered region. Residues 134–152 (SHKERFDESGKGKGKGGRE) show a composition bias toward basic and acidic residues.

This sequence belongs to the TPPP family.

The protein resides in the cytoplasm. Its subcellular location is the cytoskeleton. Regulator of microtubule dynamic that has microtubule bundling activity. The polypeptide is Tubulin polymerization-promoting protein family member 3 (tppp3) (Xenopus tropicalis (Western clawed frog)).